Reading from the N-terminus, the 320-residue chain is Ferrochelatase (320 aa).

Positions 194 and 275 each coordinate Fe cation.

This sequence belongs to the ferrochelatase family. In terms of assembly, monomer.

It localises to the cytoplasm. It carries out the reaction heme b + 2 H(+) = protoporphyrin IX + Fe(2+). It functions in the pathway porphyrin-containing compound metabolism; protoheme biosynthesis; protoheme from protoporphyrin-IX: step 1/1. Catalyzes the ferrous insertion into protoporphyrin IX. This Escherichia coli O8 (strain IAI1) protein is Ferrochelatase.